Here is a 297-residue protein sequence, read N- to C-terminus: SH2 domain-containing protein 6 (297 aa).

Disordered stretches follow at residues 1 to 61 (MSCP…FPTR) and 74 to 93 (MNPQ…RGTS). The segment covering 36-45 (PSKPPLPPPQ) has biased composition (pro residues). The SH2 domain occupies 187–295 (WYSGNCDRQS…RGLTYLRFPT (109 aa)).

The protein is SH2 domain-containing protein 6 (Sh2d6) of Mus musculus (Mouse).